The following is a 799-amino-acid chain: Protein scabrous (799 aa).

The N-terminal stretch at methionine 1–glycine 51 is a signal peptide. The tract at residues threonine 287–alanine 316 is disordered. N-linked (GlcNAc...) asparagine glycosylation is present at asparagine 372. Over residues leucine 489–histidine 498 the composition is skewed to basic residues. The interval leucine 489–aspartate 509 is disordered. The 205-residue stretch at alanine 533–proline 737 folds into the Fibrinogen C-terminal domain. Cysteine 542 and cysteine 568 are disulfide-bonded. N-linked (GlcNAc...) asparagine glycosylation is found at asparagine 587, asparagine 618, and asparagine 660. A disulfide bridge links cysteine 687 with cysteine 700. Residues asparagine 744 and asparagine 787 are each glycosylated (N-linked (GlcNAc...) asparagine).

Post-translationally, possesses five pairs of dibasic residues that may be the target of proteolytic processing.

The protein resides in the late endosome. Involved in regulation of neurogenesis. May encode a lateral inhibitor of R8 differentiation. In conjunction with Gp150, promotes Notch activation in response to Delta by regulating acquisition of insensitivity to Delta in a subset of cells. This is Protein scabrous (sca) from Drosophila melanogaster (Fruit fly).